Here is a 444-residue protein sequence, read N- to C-terminus: Radical S-adenosyl methionine domain-containing protein 1, mitochondrial (444 aa).

The transit peptide at Met1–Ser39 directs the protein to the mitochondrion. Residues His40–His274 form the Radical SAM core domain. Residue Tyr47 participates in S-adenosyl-L-methionine binding. The [4Fe-4S] cluster site is built by Cys53, Cys57, and Cys60. S-adenosyl-L-methionine-binding positions include Gly102, Gly103–Thr104, Glu135, Gln162, Arg174, and Asp199.

The protein belongs to the anaerobic coproporphyrinogen-III oxidase family. HemW subfamily. Requires [4Fe-4S] cluster as cofactor.

The protein resides in the mitochondrion. In terms of biological role, may be a heme chaperone, appears to bind heme. Homologous bacterial proteins do not have oxygen-independent coproporphyrinogen-III oxidase activity. Binds 1 [4Fe-4S] cluster. The cluster is coordinated with 3 cysteines and an exchangeable S-adenosyl-L-methionine. The protein is Radical S-adenosyl methionine domain-containing protein 1, mitochondrial (rsad1) of Danio rerio (Zebrafish).